A 327-amino-acid chain; its full sequence is Undecaprenyl-phosphate 4-deoxy-4-formamido-L-arabinose transferase (327 aa).

2 consecutive transmembrane segments (helical) span residues 233–253 and 268–288; these read ILSLIGSVVALSGFLLALLLI and VFTLFAVLFMFIGAQFVGMGL.

It belongs to the glycosyltransferase 2 family.

The protein resides in the cell inner membrane. The catalysed reaction is UDP-4-deoxy-4-formamido-beta-L-arabinose + di-trans,octa-cis-undecaprenyl phosphate = 4-deoxy-4-formamido-alpha-L-arabinopyranosyl di-trans,octa-cis-undecaprenyl phosphate + UDP. Its pathway is glycolipid biosynthesis; 4-amino-4-deoxy-alpha-L-arabinose undecaprenyl phosphate biosynthesis; 4-amino-4-deoxy-alpha-L-arabinose undecaprenyl phosphate from UDP-4-deoxy-4-formamido-beta-L-arabinose and undecaprenyl phosphate: step 1/2. It participates in bacterial outer membrane biogenesis; lipopolysaccharide biosynthesis. Its function is as follows. Catalyzes the transfer of 4-deoxy-4-formamido-L-arabinose from UDP to undecaprenyl phosphate. The modified arabinose is attached to lipid A and is required for resistance to polymyxin and cationic antimicrobial peptides. In Pectobacterium atrosepticum (strain SCRI 1043 / ATCC BAA-672) (Erwinia carotovora subsp. atroseptica), this protein is Undecaprenyl-phosphate 4-deoxy-4-formamido-L-arabinose transferase.